Consider the following 199-residue polypeptide: Cytochrome b (199 aa).

Transmembrane regions (helical) follow at residues 1 to 8, 32 to 53, 68 to 88, and 133 to 153; these read LTGLFLAM, WLIR…YFHI, WNIG…GYVL, and FFAF…LHLL. Heme b-binding residues include His38 and His52. Positions 137 and 151 each coordinate heme b. His156 serves as a coordination point for a ubiquinone. The helical transmembrane segment at 181 to 199 threads the bilayer; it reads YKDLLGFAILLVALASLAH.

It belongs to the cytochrome b family. In terms of assembly, the cytochrome bc1 complex contains 3 respiratory subunits (MT-CYB, CYC1 and UQCRFS1), 2 core proteins (UQCRC1 and UQCRC2) and probably 6 low-molecular weight proteins. The cofactor is heme b.

It is found in the mitochondrion inner membrane. Its function is as follows. Component of the ubiquinol-cytochrome c reductase complex (complex III or cytochrome b-c1 complex) that is part of the mitochondrial respiratory chain. The b-c1 complex mediates electron transfer from ubiquinol to cytochrome c. Contributes to the generation of a proton gradient across the mitochondrial membrane that is then used for ATP synthesis. The chain is Cytochrome b (mt-cyb) from Sarda chiliensis (Pacific bonito).